The sequence spans 420 residues: MVSKGLLRLVSSVNRRRMKLLLGIALFAYAASVWGNFVNMRSIQENGELKIESKIEEIVEPLREKIRDLEKSFTQKYPPVKFLSEKDRKRILITGGAGFVGSHLTDKLMMDGHEVTVVDNFFTGRKRNVEHWIGHENFELINHDVVEPLYIEVDQIYHLASPASPPNYMYNPIKTLKTNTIGTLNMLGLAKRVGARLLLASTSEVYGDPEVHPQSEDYWGHVNPIGPRACYDEGKRVAETMCYAYMKQEGVEVRVARIFNTFGPRMHMNDGRVVSNFILQALQGEPLTVYGSGSQTRAFQYVSDLVNGLVALMNSNVSSPVNLGNPEEHTILEFAQLIKNLVGSGSEIQFLSEAQDDPQKRKPDIKKAKLMLGWEPVVPLEEGLNKAIHYFRKELEYQANNQYIPKPKPARVKKGRTRHS.

M1 carries the N-acetylmethionine modification. Residues M1–K19 are Cytoplasmic-facing. Residues L20–M40 traverse the membrane as a helical; Signal-anchor for type II membrane protein segment. The Lumenal segment spans residues R41–S420. Position 94 is a phosphothreonine (T94). G98, F99, V100, D119, N120, F122, T123, G124, D144, and V145 together coordinate NAD(+). Positions 149 and 150 each coordinate UDP-alpha-D-glucuronate. Residues L159 and S161 each coordinate NAD(+). UDP-alpha-D-glucuronate is bound at residue K177. T178 contacts NAD(+). Residues N185, G188, K191, and R192 each coordinate UDP-alpha-D-glucuronate. NAD(+) contacts are provided by A200, Y231, and K235. Catalysis depends on Y231, which acts as the Proton acceptor. UDP-alpha-D-glucuronate is bound by residues Y245, Q248, and E249. Residues T261, H267, and R272 each coordinate NAD(+). N316 carries N-linked (GlcNAc...) asparagine glycosylation.

The protein belongs to the NAD(P)-dependent epimerase/dehydratase family. UDP-glucuronic acid decarboxylase subfamily. Homodimer and homotetramer. Interacts with AKT1. It depends on NAD(+) as a cofactor.

The protein resides in the golgi apparatus. Its subcellular location is the golgi stack membrane. The enzyme catalyses UDP-alpha-D-glucuronate + H(+) = UDP-alpha-D-xylose + CO2. Its pathway is nucleotide-sugar biosynthesis; UDP-alpha-D-xylose biosynthesis; UDP-alpha-D-xylose from UDP-alpha-D-glucuronate: step 1/1. Its function is as follows. Catalyzes the NAD-dependent decarboxylation of UDP-glucuronic acid to UDP-xylose. Necessary for the biosynthesis of the core tetrasaccharide in glycosaminoglycan biosynthesis. In Mus musculus (Mouse), this protein is UDP-glucuronic acid decarboxylase 1 (Uxs1).